The sequence spans 235 residues: Claudin-15 (235 aa).

A topological domain (cytoplasmic) is located at residue Met1. The chain crosses the membrane as a helical span at residues 2–24; the sequence is LVAVEIFGFFLTAVGLLMLGVTL. Residues 25-74 are Extracellular-facing; it reads AHSSWRVSTVHGNVITTNTIFENLWYSCATDSMGVHNCWEFPSMLALSGY. An intrachain disulfide couples Cys52 to Cys62. A helical transmembrane segment spans residues 75–99; the sequence is IQACRALMITAILLGFLGLFLGMVG. Over 100–115 the chain is Cytoplasmic; that stretch reads LRCTNIGGLELSRKTK. Ser111 carries the post-translational modification Phosphoserine. A helical transmembrane segment spans residues 116–140; sequence LAATAGALHILAGICGMVAVSWYAF. The Extracellular segment spans residues 141–159; sequence NITRDFFNPLYAGTKYELG. The interval 146–147 is important for the formation of tight-junction strand-like structures; the sequence is FF. A helical membrane pass occupies residues 160-182; that stretch reads PALYLGWSACLLAILGGICLFSN. The Cytoplasmic portion of the chain corresponds to 183–235; sequence CCCSRDRDPATGVQLPYKAPVIPAASLAARLPAAASDEEGDSSFGKYGKNAYV. Phosphoserine occurs at positions 218 and 225.

It belongs to the claudin family. In terms of assembly, can form homo- and heteropolymeric tight junction strands. Post-translationally, palmitoylated.

Its subcellular location is the cell junction. The protein localises to the tight junction. The protein resides in the cell membrane. The catalysed reaction is Na(+)(in) = Na(+)(out). It catalyses the reaction K(+)(in) = K(+)(out). It carries out the reaction Cs(+)(in) = Cs(+)(out). The enzyme catalyses Rb(+)(in) = Rb(+)(out). The catalysed reaction is Li(+)(in) = Li(+)(out). It catalyses the reaction NH4(+)(in) = NH4(+)(out). It carries out the reaction methylamine(out) = methylamine(in). The enzyme catalyses H2O(in) = H2O(out). In terms of biological role, forms paracellular channels: polymerizes in tight junction strands with cation- and water-selective channels through the strands, conveying epithelial permeability in a process known as paracellular tight junction permeability. In intestinal epithelium, allows for sodium and water fluxes from the peritoneal side to the lumen of the intestine to regulate nutrient absorption and intestinal morphogenesis. The protein is Claudin-15 (CLDN15) of Bos taurus (Bovine).